Here is a 183-residue protein sequence, read N- to C-terminus: Peptide deformylase (183 aa).

Residues Cys90 and His132 each coordinate Fe cation. Glu133 is a catalytic residue. Residue His136 coordinates Fe cation.

This sequence belongs to the polypeptide deformylase family. Fe(2+) serves as cofactor.

It catalyses the reaction N-terminal N-formyl-L-methionyl-[peptide] + H2O = N-terminal L-methionyl-[peptide] + formate. In terms of biological role, removes the formyl group from the N-terminal Met of newly synthesized proteins. Requires at least a dipeptide for an efficient rate of reaction. N-terminal L-methionine is a prerequisite for activity but the enzyme has broad specificity at other positions. The protein is Peptide deformylase of Parafrankia sp. (strain EAN1pec).